A 291-amino-acid chain; its full sequence is Oxidative stress-responsive serine-rich protein 1 (291 aa).

Positions 44–139 (RTTVDDTKPK…STGENSTSLD (96 aa)) are disordered. Positions 65–83 (STRKSSRGAVRIQRRRRSK) are enriched in basic residues. Polar residues-rich tracts occupy residues 95 to 113 (CSTT…SQTE) and 127 to 139 (KEFS…TSLD). The residue at position 143 (Thr-143) is a Phosphothreonine.

Ubiquitous with high level in testis, placenta and cardiac myocytes. As to expression, expressed in testis, unpreganant uterus and cardiac myocytes.

The sequence is that of Oxidative stress-responsive serine-rich protein 1 (Oser1) from Rattus norvegicus (Rat).